The primary structure comprises 565 residues: NAD-dependent malic enzyme (565 aa).

The Proton donor role is filled by Y104. R157 provides a ligand contact to NAD(+). The active-site Proton acceptor is the K175. Positions 246, 247, and 270 each coordinate a divalent metal cation. NAD(+) contacts are provided by D270 and N418.

It belongs to the malic enzymes family. In terms of assembly, homotetramer. Requires Mg(2+) as cofactor. Mn(2+) is required as a cofactor.

It catalyses the reaction (S)-malate + NAD(+) = pyruvate + CO2 + NADH. The enzyme catalyses oxaloacetate + H(+) = pyruvate + CO2. In Photorhabdus laumondii subsp. laumondii (strain DSM 15139 / CIP 105565 / TT01) (Photorhabdus luminescens subsp. laumondii), this protein is NAD-dependent malic enzyme.